The sequence spans 305 residues: Catechol 1,2-dioxygenase (305 aa).

Residues tyrosine 163, tyrosine 197, histidine 221, and histidine 223 each contribute to the Fe cation site.

Belongs to the intradiol ring-cleavage dioxygenase family. Homodimer. Fe(3+) is required as a cofactor.

It carries out the reaction catechol + O2 = cis,cis-muconate + 2 H(+). The protein operates within aromatic compound metabolism; beta-ketoadipate pathway; 5-oxo-4,5-dihydro-2-furylacetate from catechol: step 1/3. The sequence is that of Catechol 1,2-dioxygenase (catA) from Acinetobacter guillouiae (Acinetobacter genomosp. 11).